Reading from the N-terminus, the 406-residue chain is LIM/homeobox protein Lhx2 (406 aa).

LIM zinc-binding domains follow at residues 53–105 (CAGC…CKED) and 115–168 (CARC…CRLH). Residues 250–270 (DAEHLDRDQPYPSSQKTKRMR) form a disordered region. A DNA-binding region (homeobox) is located at residues 266-325 (TKRMRTSFKHHQLRTMKSYFAINHNPDAKDLKQLAQKTGLTKRVLQVWFQNARAKFRRNL). The Nuclear localization signal signature appears at 307-323 (KRVLQVWFQNARAKFRR). The span at 328 to 356 (QENTGVDKSTDAALQTGTPSGPASELSNA) shows a compositional bias: polar residues. 2 disordered regions span residues 328-374 (QENT…TSPT) and 387-406 (GNLEGHEPHSPSQTTLTNLF). Residues 357–374 (SLSPSSTPTTLTDLTSPT) show a composition bias toward low complexity. Residues 396–406 (SPSQTTLTNLF) are compositionally biased toward polar residues.

In terms of assembly, interacts (via LIM domains) with CITED2. Interacts with POU4F2.

The protein resides in the nucleus. Its function is as follows. Acts as a transcriptional activator. Stimulates the promoter of the alpha-glycoprotein gene. Transcriptional regulatory protein involved in the control of cell differentiation in developing lymphoid and neural cell types. This Homo sapiens (Human) protein is LIM/homeobox protein Lhx2 (LHX2).